The primary structure comprises 217 residues: Probable GTP-binding protein EngB (217 aa).

The 178-residue stretch at 37 to 214 (AGIEVAFAGR…RAAMIRLLDE (178 aa)) folds into the EngB-type G domain. GTP-binding positions include 45–52 (GRSNVGKS), 72–76 (GRTQE), 92–95 (DMPG), 159–162 (TKAD), and 193–195 (TSS). Mg(2+) contacts are provided by Ser52 and Thr74.

The protein belongs to the TRAFAC class TrmE-Era-EngA-EngB-Septin-like GTPase superfamily. EngB GTPase family. The cofactor is Mg(2+).

Functionally, necessary for normal cell division and for the maintenance of normal septation. This Rhodopseudomonas palustris (strain BisB5) protein is Probable GTP-binding protein EngB.